The following is a 240-amino-acid chain: Ribosomal RNA small subunit methyltransferase G (240 aa).

S-adenosyl-L-methionine contacts are provided by residues Gly-79, Phe-84, Ala-130–Glu-131, and Arg-149.

The protein belongs to the methyltransferase superfamily. RNA methyltransferase RsmG family.

The protein localises to the cytoplasm. Its function is as follows. Specifically methylates the N7 position of a guanine in 16S rRNA. The chain is Ribosomal RNA small subunit methyltransferase G from Desulforamulus reducens (strain ATCC BAA-1160 / DSM 100696 / MI-1) (Desulfotomaculum reducens).